The following is a 246-amino-acid chain: Pyridoxine 5'-phosphate synthase (246 aa).

Residue asparagine 9 coordinates 3-amino-2-oxopropyl phosphate. 11 to 12 is a binding site for 1-deoxy-D-xylulose 5-phosphate; it reads DH. 3-amino-2-oxopropyl phosphate is bound at residue arginine 20. Histidine 45 serves as the catalytic Proton acceptor. Arginine 47 and histidine 52 together coordinate 1-deoxy-D-xylulose 5-phosphate. The Proton acceptor role is filled by glutamate 72. Threonine 102 provides a ligand contact to 1-deoxy-D-xylulose 5-phosphate. The active-site Proton donor is histidine 193. 3-amino-2-oxopropyl phosphate contacts are provided by residues glycine 194 and 215-216; that span reads GH.

This sequence belongs to the PNP synthase family. In terms of assembly, homooctamer; tetramer of dimers.

It localises to the cytoplasm. It carries out the reaction 3-amino-2-oxopropyl phosphate + 1-deoxy-D-xylulose 5-phosphate = pyridoxine 5'-phosphate + phosphate + 2 H2O + H(+). It participates in cofactor biosynthesis; pyridoxine 5'-phosphate biosynthesis; pyridoxine 5'-phosphate from D-erythrose 4-phosphate: step 5/5. Functionally, catalyzes the complicated ring closure reaction between the two acyclic compounds 1-deoxy-D-xylulose-5-phosphate (DXP) and 3-amino-2-oxopropyl phosphate (1-amino-acetone-3-phosphate or AAP) to form pyridoxine 5'-phosphate (PNP) and inorganic phosphate. This Colwellia psychrerythraea (strain 34H / ATCC BAA-681) (Vibrio psychroerythus) protein is Pyridoxine 5'-phosphate synthase.